Here is a 343-residue protein sequence, read N- to C-terminus: Selenide, water dikinase (343 aa).

Sec13 is an active-site residue. Position 13 (Sec13) is a non-standard amino acid, selenocysteine. Residues Lys16 and 44–46 (TAD) contribute to the ATP site. Asp47 contributes to the Mg(2+) binding site. ATP contacts are provided by residues Asp64, Asp87, and 135–137 (GHT). Residue Asp87 coordinates Mg(2+). Asp223 contributes to the Mg(2+) binding site.

The protein belongs to the selenophosphate synthase 1 family. Class I subfamily. In terms of assembly, homodimer. Requires Mg(2+) as cofactor.

It catalyses the reaction hydrogenselenide + ATP + H2O = selenophosphate + AMP + phosphate + 2 H(+). Functionally, synthesizes selenophosphate from selenide and ATP. The chain is Selenide, water dikinase from Geobacter metallireducens (strain ATCC 53774 / DSM 7210 / GS-15).